The sequence spans 361 residues: MTHQQTLPTTAASFLMAGGGTGGHVIPALAVARELRSRGHKVFFVGTQHGMEARLVPPEGFEFKTIEIGGLNQVSWNQKFATLSRLPITTLKCGRSVRDASAVFSMGGYVAGPPVMAALVRRVPVVVMEPNAFPGFTNRVIARLVSRALVSFPETAAFFPKGRTEVTGLPVREEFFRIPPKARGDVLQILITGGSQGSRTLNHAARQSWPLFRNSGYPVRITHQTGTGSFQEIRDAFAQSGLEGEVVPFIADMPAAFAAADLIVCRSGAGTVSELAAAGKPSILVPFPFAADDHQTRNAQSLERAGAARLVRDAEMTGEKFFEVVTSVTGELSRMGTAARQFAKPGAAKRAADILEEVARP.

UDP-N-acetyl-alpha-D-glucosamine contacts are provided by residues 21–23 (TGG), Asn-131, Arg-172, Ser-195, Ile-250, and Gln-295.

Belongs to the glycosyltransferase 28 family. MurG subfamily.

It localises to the cell inner membrane. The enzyme catalyses di-trans,octa-cis-undecaprenyl diphospho-N-acetyl-alpha-D-muramoyl-L-alanyl-D-glutamyl-meso-2,6-diaminopimeloyl-D-alanyl-D-alanine + UDP-N-acetyl-alpha-D-glucosamine = di-trans,octa-cis-undecaprenyl diphospho-[N-acetyl-alpha-D-glucosaminyl-(1-&gt;4)]-N-acetyl-alpha-D-muramoyl-L-alanyl-D-glutamyl-meso-2,6-diaminopimeloyl-D-alanyl-D-alanine + UDP + H(+). It functions in the pathway cell wall biogenesis; peptidoglycan biosynthesis. Functionally, cell wall formation. Catalyzes the transfer of a GlcNAc subunit on undecaprenyl-pyrophosphoryl-MurNAc-pentapeptide (lipid intermediate I) to form undecaprenyl-pyrophosphoryl-MurNAc-(pentapeptide)GlcNAc (lipid intermediate II). This chain is UDP-N-acetylglucosamine--N-acetylmuramyl-(pentapeptide) pyrophosphoryl-undecaprenol N-acetylglucosamine transferase, found in Solibacter usitatus (strain Ellin6076).